Reading from the N-terminus, the 468-residue chain is Na(+)/H(+) antiporter (468 aa).

8 consecutive transmembrane segments (helical) span residues 12-32 (HLAL…SEVF), 36-56 (LLVG…PHAA), 81-96 (DVRV…GAYF), 103-123 (IIVM…GFAY), 133-153 (GSLL…ALIV), 169-189 (LLIA…YFAI), 204-224 (WVLL…CVIG), and 258-278 (GIGT…GILF). The N-linked (GlcNAc...) asparagine glycan is linked to asparagine 287. The helical transmembrane segment at 293–313 (VPAFIDQTFSLLFFTYYGTII) threads the bilayer. Asparagine 319 carries an N-linked (GlcNAc...) asparagine glycan. 3 helical membrane-spanning segments follow: residues 320-340 (WSVE…TLVC), 362-382 (ALFV…AFLA), and 408-428 (IIWP…GFSI). Residues serine 449 and serine 451 each carry the phosphoserine modification.

Belongs to the fungal Na(+)/H(+) exchanger family.

It localises to the cell membrane. Its function is as follows. Sodium export from cell, takes up external protons in exchange for internal sodium ions. Involved in regulation of pH. The protein is Na(+)/H(+) antiporter of Schizosaccharomyces pombe (strain 972 / ATCC 24843) (Fission yeast).